The sequence spans 157 residues: Mediator of RNA polymerase II transcription subunit 10 (157 aa).

The protein belongs to the Mediator complex subunit 10 family. As to quaternary structure, component of the Mediator complex, which is composed of at least 21 subunits that form three structurally distinct submodules. The Mediator head module contains MED6, MED8, MED11, SRB4/MED17, SRB5/MED18, ROX3/MED19, SRB2/MED20 and SRB6/MED22, the middle module contains MED1, MED4, NUT1/MED5, MED7, CSE2/MED9, NUT2/MED10, SRB7/MED21 and SOH1/MED31, and the tail module contains MED2, PGD1/MED3, RGR1/MED14, GAL11/MED15 and SIN4/MED16. The head and the middle modules interact directly with RNA polymerase II, whereas the elongated tail module interacts with gene-specific regulatory proteins. NUT2/MED10 interacts directly with SRB7/MED21.

The protein resides in the nucleus. Component of the Mediator complex, a coactivator involved in the regulated transcription of nearly all RNA polymerase II-dependent genes. Mediator functions as a bridge to convey information from gene-specific regulatory proteins to the basal RNA polymerase II transcription machinery. The Mediator complex, having a compact conformation in its free form, is recruited to promoters by direct interactions with regulatory proteins and serves for the assembly of a functional preinitiation complex with RNA polymerase II and the general transcription factors. The Mediator complex unfolds to an extended conformation and partially surrounds RNA polymerase II, specifically interacting with the unphosphorylated form of the C-terminal domain (CTD) of RNA polymerase II. The Mediator complex dissociates from the RNA polymerase II holoenzyme and stays at the promoter when transcriptional elongation begins. In Saccharomyces cerevisiae (strain ATCC 204508 / S288c) (Baker's yeast), this protein is Mediator of RNA polymerase II transcription subunit 10 (NUT2).